Consider the following 295-residue polypeptide: NAD kinase (295 aa).

Catalysis depends on D74, which acts as the Proton acceptor. NAD(+) is bound by residues D74–G75, N148–D149, H159, R176, D178, and T189–S194.

This sequence belongs to the NAD kinase family. The cofactor is a divalent metal cation.

Its subcellular location is the cytoplasm. The catalysed reaction is NAD(+) + ATP = ADP + NADP(+) + H(+). In terms of biological role, involved in the regulation of the intracellular balance of NAD and NADP, and is a key enzyme in the biosynthesis of NADP. Catalyzes specifically the phosphorylation on 2'-hydroxyl of the adenosine moiety of NAD to yield NADP. In Legionella pneumophila (strain Paris), this protein is NAD kinase.